The sequence spans 282 residues: Shikimate dehydrogenase (NADP(+)) (282 aa).

Shikimate is bound by residues 15–17 and T62; that span reads SKS. Catalysis depends on K66, which acts as the Proton acceptor. N87 and D103 together coordinate shikimate. NADP(+)-binding positions include 127–131, 151–156, and M220; these read GAGGA and NRTHTK. A shikimate-binding site is contributed by Y222. Position 244 (G244) interacts with NADP(+).

This sequence belongs to the shikimate dehydrogenase family. Homodimer.

It catalyses the reaction shikimate + NADP(+) = 3-dehydroshikimate + NADPH + H(+). Its pathway is metabolic intermediate biosynthesis; chorismate biosynthesis; chorismate from D-erythrose 4-phosphate and phosphoenolpyruvate: step 4/7. Its function is as follows. Involved in the biosynthesis of the chorismate, which leads to the biosynthesis of aromatic amino acids. Catalyzes the reversible NADPH linked reduction of 3-dehydroshikimate (DHSA) to yield shikimate (SA). This chain is Shikimate dehydrogenase (NADP(+)), found in Shewanella baltica (strain OS223).